We begin with the raw amino-acid sequence, 416 residues long: Nuclear hormone receptor family member nhr-67 (416 aa).

Positions 18–98 (DVDCRVCEDH…IGMNKDAVQH (81 aa)) form a DNA-binding region, nuclear receptor. 2 consecutive NR C4-type zinc fingers follow at residues 21-41 (CRVCEDHSSGKHYSIFSCDGC) and 57-86 (CKNKGSPSEGQCKVDKTHRNQCRACRLRKC). Residues 331 to 398 (KTETEEGEDI…SSRPRHSIRS (68 aa)) are disordered. Residues 335-346 (EEGEDIEEEDDA) show a composition bias toward acidic residues. A compositionally biased stretch (low complexity) spans 377-390 (SSTQPSSASSPSSS).

It belongs to the nuclear hormone receptor family. As to expression, expressed in linker cell.

The protein localises to the nucleus. Its function is as follows. Orphan nuclear receptor that binds DNA containing an extended core motif half-site sequence 5'-AAGTCA-3'. In males, plays an essential role in the migration of the linker cell which guides gonad elongation during the L3 and L4 stages of larval development by negatively regulating the expression of netrin receptor unc-5 at the mid-L3 stage. Involved in the regulation of non-apoptotic cell death in the linker cell, acting upstream of or in parallel to transcription factor hsf-1. Represses hypoxia response genes, fmo-2 and acs-2, in both normoxic and hypoxic conditions, probably acting via repression of nuclear receptor nhr-49. This Caenorhabditis elegans protein is Nuclear hormone receptor family member nhr-67 (nhr-67).